A 397-amino-acid chain; its full sequence is Phosphoglycerate kinase (397 aa).

Substrate-binding positions include aspartate 21–asparagine 23, arginine 36, histidine 59–arginine 62, arginine 119, and arginine 152. ATP is bound by residues lysine 202, glutamate 324, and glycine 354–threonine 357.

Belongs to the phosphoglycerate kinase family. As to quaternary structure, monomer.

The protein localises to the cytoplasm. The enzyme catalyses (2R)-3-phosphoglycerate + ATP = (2R)-3-phospho-glyceroyl phosphate + ADP. The protein operates within carbohydrate degradation; glycolysis; pyruvate from D-glyceraldehyde 3-phosphate: step 2/5. This Cereibacter sphaeroides (strain ATCC 17025 / ATH 2.4.3) (Rhodobacter sphaeroides) protein is Phosphoglycerate kinase.